The primary structure comprises 610 residues: Transcription termination factor Rho (610 aa).

Positions 117 to 227 are disordered; sequence EVSRRERRGA…GDGAEAELRQ (111 aa). Positions 118 to 131 are enriched in basic and acidic residues; sequence VSRRERRGASREAD. The segment covering 178 to 187 has biased composition (polar residues); it reads GVEQQSSSLQ. The segment covering 189 to 198 has biased composition (basic and acidic residues); that stretch reads RGDDDGEGRQ. Basic residues predominate over residues 199–214; sequence GRRGRRFRDRDRRRRG. Basic and acidic residues predominate over residues 215-227; sequence ERSGDGAEAELRQ. Residues 231–309 enclose the Rho RNA-BD domain; that stretch reads VQPVAGILDV…VRLDSINGGS (79 aa). ATP-binding positions include 352–357, 364–369, and Arg-395; these read GKGQRA and KAGKTT.

The protein belongs to the Rho family. In terms of assembly, homohexamer. The homohexamer assembles into an open ring structure.

Its function is as follows. Facilitates transcription termination by a mechanism that involves Rho binding to the nascent RNA, activation of Rho's RNA-dependent ATPase activity, and release of the mRNA from the DNA template. The sequence is that of Transcription termination factor Rho from Mycobacterium leprae (strain TN).